Here is a 316-residue protein sequence, read N- to C-terminus: Biotin synthase (316 aa).

The Radical SAM core domain occupies Thr-36–Arg-264. The [4Fe-4S] cluster site is built by Cys-51, Cys-55, and Cys-58. [2Fe-2S] cluster contacts are provided by Cys-96, Cys-127, Cys-187, and Arg-259.

It belongs to the radical SAM superfamily. Biotin synthase family. As to quaternary structure, homodimer. [4Fe-4S] cluster serves as cofactor. Requires [2Fe-2S] cluster as cofactor.

It carries out the reaction (4R,5S)-dethiobiotin + (sulfur carrier)-SH + 2 reduced [2Fe-2S]-[ferredoxin] + 2 S-adenosyl-L-methionine = (sulfur carrier)-H + biotin + 2 5'-deoxyadenosine + 2 L-methionine + 2 oxidized [2Fe-2S]-[ferredoxin]. It functions in the pathway cofactor biosynthesis; biotin biosynthesis; biotin from 7,8-diaminononanoate: step 2/2. Functionally, catalyzes the conversion of dethiobiotin (DTB) to biotin by the insertion of a sulfur atom into dethiobiotin via a radical-based mechanism. This chain is Biotin synthase, found in Gluconacetobacter diazotrophicus (strain ATCC 49037 / DSM 5601 / CCUG 37298 / CIP 103539 / LMG 7603 / PAl5).